The chain runs to 274 residues: Penicillin-insensitive murein endopeptidase (274 aa).

An N-terminal signal peptide occupies residues 1–19 (MNKTAIALLALLASSASLA). Disulfide bonds link Cys-44–Cys-265, Cys-187–Cys-235, and Cys-216–Cys-223. Zn(2+) contacts are provided by His-110, His-113, Asp-120, Asp-147, His-150, and His-211. The disordered stretch occupies residues 227–274 (PLPPPGDGCGAELQSWFEPPKPGTTKPEKKTPPPLPPSCQALLDEHVI).

The protein belongs to the peptidase M74 family. As to quaternary structure, dimer. Zn(2+) serves as cofactor.

It localises to the periplasm. Murein endopeptidase that cleaves the D-alanyl-meso-2,6-diamino-pimelyl amide bond that connects peptidoglycan strands. Likely plays a role in the removal of murein from the sacculus. This is Penicillin-insensitive murein endopeptidase from Escherichia coli (strain SE11).